Consider the following 138-residue polypeptide: Putative pre-16S rRNA nuclease (138 aa).

This sequence belongs to the YqgF nuclease family.

The protein resides in the cytoplasm. In terms of biological role, could be a nuclease involved in processing of the 5'-end of pre-16S rRNA. The chain is Putative pre-16S rRNA nuclease from Listeria monocytogenes serovar 1/2a (strain ATCC BAA-679 / EGD-e).